We begin with the raw amino-acid sequence, 71 residues long: DNA gyrase inhibitor YacG (71 aa).

Zn(2+)-binding residues include C8, C11, C27, and C31. The tract at residues 48 to 71 (VVEDDDLPPDAPGGESGGASGRLN) is disordered. Over residues 61 to 71 (GESGGASGRLN) the composition is skewed to gly residues.

The protein belongs to the DNA gyrase inhibitor YacG family. Interacts with GyrB. Zn(2+) serves as cofactor.

Functionally, inhibits all the catalytic activities of DNA gyrase by preventing its interaction with DNA. Acts by binding directly to the C-terminal domain of GyrB, which probably disrupts DNA binding by the gyrase. This is DNA gyrase inhibitor YacG from Ralstonia nicotianae (strain ATCC BAA-1114 / GMI1000) (Ralstonia solanacearum).